The primary structure comprises 190 residues: Myosin, light chain 1, alkali; skeletal, fast (190 aa).

Positions 1-17 (MAPKKDAKKPEPPKKAE) are enriched in basic and acidic residues. Residues 1-33 (MAPKKDAKKPEPPKKAEPAPAPAPAPEPPKADA) form a disordered region. The span at 19-28 (APAPAPAPEP) shows a compositional bias: pro residues. EF-hand domains are found at residues 46 to 81 (DQME…LGQN) and 123 to 158 (ATYD…LGEK).

As to quaternary structure, myosin is a hexamer of 2 heavy chains and 4 light chains. Does not bind calcium. As to expression, expressed in fast muscle fibers during skeletal muscle differentiation.

In terms of biological role, non-regulatory myosin light chain required for proper formation and/or maintenance of myofibers, and thus appropriate muscle function. The sequence is that of Myosin, light chain 1, alkali; skeletal, fast from Danio rerio (Zebrafish).